We begin with the raw amino-acid sequence, 118 residues long: MRKSYRIKKEAEFQQVFETRNSVANRQFVVYSMEKPQQPHFRVGISVGKKIGNAVHRNWVKRRIRQSLLELKPHLKQDVDFLVIARPRADGISMTDAKRSLVHVLKLAKLLDSDYSEE.

The protein belongs to the RnpA family. In terms of assembly, consists of a catalytic RNA component (M1 or rnpB) and a protein subunit.

The enzyme catalyses Endonucleolytic cleavage of RNA, removing 5'-extranucleotides from tRNA precursor.. RNaseP catalyzes the removal of the 5'-leader sequence from pre-tRNA to produce the mature 5'-terminus. It can also cleave other RNA substrates such as 4.5S RNA. The protein component plays an auxiliary but essential role in vivo by binding to the 5'-leader sequence and broadening the substrate specificity of the ribozyme. This is Ribonuclease P protein component from Levilactobacillus brevis (strain ATCC 367 / BCRC 12310 / CIP 105137 / JCM 1170 / LMG 11437 / NCIMB 947 / NCTC 947) (Lactobacillus brevis).